Here is a 350-residue protein sequence, read N- to C-terminus: tRNA uridine(34) hydroxylase (350 aa).

The 95-residue stretch at 146 to 240 (DDPDALFIDM…YARKAREQGL (95 aa)) folds into the Rhodanese domain. Catalysis depends on Cys200, which acts as the Cysteine persulfide intermediate.

This sequence belongs to the TrhO family.

It catalyses the reaction uridine(34) in tRNA + AH2 + O2 = 5-hydroxyuridine(34) in tRNA + A + H2O. Functionally, catalyzes oxygen-dependent 5-hydroxyuridine (ho5U) modification at position 34 in tRNAs, the first step in 5-carboxymethoxyuridine (cmo5U) biosynthesis. May be part of an alternate pathway, which is able to bypass cmo5U biogenesis in a subset of tRNAs under aerobic conditions. The polypeptide is tRNA uridine(34) hydroxylase (Escherichia coli (strain SE11)).